The sequence spans 669 residues: MDRTAAQLRIQELHREINRHNYLYYVEDRPEITDAEYDLLLRELQQLEKEFPDLVTADSPTQRVGAAPLDKFNQVSHRLPMLSLENAFNEGEMRDFDERIKRYLGLPMAKEIEYVCEPKMDGLAVELIYEEGSLTFGSTRGDGYVGEDVTQNLKTVKSIPLRLHCSPPPSLVEVRGEVYLGLAPFQKLNMDREEAGLPPFANPRNAAAGSLRQLDPRITARRPLSIFCYAPGLVEGYEFTSQSQMLATLPQWGLPVNPLIKKVAGIDAVLAYYREIGETRESLPYEIDGVVIKVDSFDLQRDLGEKTRSPRWAIAWKFPPRQAVTVVEDIVPQVGRTGVITPVAHLKPVEVSGVMVSRATLHNWEEMEKKDIRKGDTVVVERAGDVIPAVVKVMTEKRLEGAELLAVPAACPECGSEIVKIPGEVAIRCLGLTCPAQIRETIIHFASRHAMDIEGMGDKYVEQLLRLELVKTVADLYYLTKKDFMRFERMGDKLAENLLNAIEASKHRELSRFIFALGIRHVGEHTAKLLASAFGSVEHLEKATEEELLSIREVGPQVAQSVRTFFRNPANREVIERMFAAGVRPAVEEKRLGGRFTGKTFVFTGALTRFTRDDAKNMVENEGGHAAGSVSKKTDYVVAGAEAGSKLDKARQLGVNVLTEDEFLKMLEG.

NAD(+) contacts are provided by residues 34 to 38 (DAEYD), 83 to 84 (SL), and Glu-117. The active-site N6-AMP-lysine intermediate is the Lys-119. 4 residues coordinate NAD(+): Arg-140, Glu-177, Lys-293, and Lys-317. Cys-411, Cys-414, Cys-429, and Cys-434 together coordinate Zn(2+). The BRCT domain maps to 591 to 669 (RLGGRFTGKT…EDEFLKMLEG (79 aa)).

This sequence belongs to the NAD-dependent DNA ligase family. LigA subfamily. Requires Mg(2+) as cofactor. The cofactor is Mn(2+).

It catalyses the reaction NAD(+) + (deoxyribonucleotide)n-3'-hydroxyl + 5'-phospho-(deoxyribonucleotide)m = (deoxyribonucleotide)n+m + AMP + beta-nicotinamide D-nucleotide.. Its function is as follows. DNA ligase that catalyzes the formation of phosphodiester linkages between 5'-phosphoryl and 3'-hydroxyl groups in double-stranded DNA using NAD as a coenzyme and as the energy source for the reaction. It is essential for DNA replication and repair of damaged DNA. In Geotalea daltonii (strain DSM 22248 / JCM 15807 / FRC-32) (Geobacter daltonii), this protein is DNA ligase.